The sequence spans 215 residues: Adenylate kinase (215 aa).

ATP is bound at residue 10 to 15; it reads GTGKGT. The tract at residues 30-59 is NMP; it reads STGHILRKISTKKTLFGEKIKNIINSGKLV. AMP-binding positions include Thr31, Arg36, 57 to 59, 85 to 88, and Gln92; these read KLV and GFPR. Residues 122–157 form an LID region; the sequence is TRTINPITGTIYNNVIQKNSELKNLKINTLKSRLDD. ATP-binding positions include Arg123 and 132-133; that span reads IY. Residues Arg154 and Arg165 each contribute to the AMP site. Position 198 (Asn198) interacts with ATP.

Belongs to the adenylate kinase family. Monomer.

The protein resides in the cytoplasm. It carries out the reaction AMP + ATP = 2 ADP. It participates in purine metabolism; AMP biosynthesis via salvage pathway; AMP from ADP: step 1/1. Its function is as follows. Catalyzes the reversible transfer of the terminal phosphate group between ATP and AMP. Plays an important role in cellular energy homeostasis and in adenine nucleotide metabolism. The protein is Adenylate kinase of Buchnera aphidicola subsp. Baizongia pistaciae (strain Bp).